The sequence spans 142 residues: Gonadotropin subunit beta-2 (142 aa).

The N-terminal stretch at methionine 1–glycine 24 is a signal peptide. Disulfide bonds link cysteine 30-cysteine 78, cysteine 44-cysteine 93, cysteine 47-cysteine 131, cysteine 55-cysteine 109, cysteine 59-cysteine 111, and cysteine 114-cysteine 121. Asparagine 34 carries an N-linked (GlcNAc...) asparagine glycan.

This sequence belongs to the glycoprotein hormones subunit beta family. Heterodimer of an alpha and a beta chain.

It localises to the secreted. Involved in gametogenesis and steroidogenesis. The sequence is that of Gonadotropin subunit beta-2 (cgbb) from Coregonus autumnalis (Arctic cisco).